Reading from the N-terminus, the 95-residue chain is Citrate lyase acyl carrier protein (95 aa).

An O-(phosphoribosyl dephospho-coenzyme A)serine modification is found at serine 14.

This sequence belongs to the CitD family. In terms of assembly, oligomer with a subunit composition of (alpha,beta,gamma)6.

The protein localises to the cytoplasm. Covalent carrier of the coenzyme of citrate lyase. The chain is Citrate lyase acyl carrier protein from Haemophilus influenzae (strain ATCC 51907 / DSM 11121 / KW20 / Rd).